The chain runs to 53 residues: Bowman-Birk type proteinase inhibitor II-4 (53 aa).

4 disulfides stabilise this stretch: cysteine 8/cysteine 23, cysteine 13/cysteine 21, cysteine 30/cysteine 37, and cysteine 34/cysteine 49.

This sequence belongs to the Bowman-Birk serine protease inhibitor family.

This Triticum aestivum (Wheat) protein is Bowman-Birk type proteinase inhibitor II-4.